The following is a 1315-amino-acid chain: ESX secretion system protein EccC (1315 aa).

Positions 1–11 (MSTVLVRRKER) are enriched in basic residues. The disordered stretch occupies residues 1–21 (MSTVLVRRKERRQPPQMPRGE). Residues 1–40 (MSTVLVRRKERRQPPQMPRGEILLESPPELPEVVTNSFQN) are Cytoplasmic-facing. A helical transmembrane segment spans residues 41-61 (VLMYLPMAAGSAAMVFTFLNH). Residues 62–64 (RNT) lie on the Extracellular side of the membrane. A helical membrane pass occupies residues 65–85 (LQLVAGGMFALSMFGMMFGQL). Residues 86–1315 (SQQSGERKTK…RLIQTAYRES (1230 aa)) lie on the Cytoplasmic side of the membrane. 2 FtsK domains span residues 456–656 (GRPL…MESR) and 813–1004 (RDPY…YESE). 479-486 (GATGSGKS) provides a ligand contact to ATP. The active site involves E593. Residues 721–1315 (RPQVVEQPQP…RLIQTAYRES (595 aa)) form a binds EsxB region. ATP is bound by residues 834–839 (QTGKST), T1031, 1119–1124 (ECGKSN), Q1293, and 1310–1311 (TA). Residues 1099 to 1282 (LSPVYLDFNT…MSGNKDEGIL (184 aa)) form the FtsK 3 domain.

In terms of assembly, the cytosolic domain can form homodimers. Binds EsxB, which leads to multimerization, however EsxA disassembles the multimers, possibly by making EccC-EsxA-EsxB trimers instead of EccC-EsxB-EsxB-EccC tetramers. Forms a complex with EsxA and EsxB, probably wholly mediated by EsxB.

The protein resides in the cell membrane. EsxB binding to the third FtsK domain causes multimerization; a subsequent unknown step relieves the allosteric inhibition of linker 2 on FtsK domain 1, activating the ATPase activity; a mutant EsxB ('Ala-98') does not cause multimers to form. Its function is as follows. Part of the ESX specialized secretion system, which exports proteins from the cell including EsxA (ESAT-6) and EsxB (CFP-10). Has weak intrinsic ATPase activity; probably only the first FtsK domain can hydrolyze ATP. Might be the translocase subunit. The sequence is that of ESX secretion system protein EccC from Thermomonospora curvata (strain ATCC 19995 / DSM 43183 / JCM 3096 / KCTC 9072 / NBRC 15933 / NCIMB 10081 / Henssen B9).